Here is a 106-residue protein sequence, read N- to C-terminus: Large ribosomal subunit protein uL24 (106 aa).

Belongs to the universal ribosomal protein uL24 family. In terms of assembly, part of the 50S ribosomal subunit.

Its function is as follows. One of two assembly initiator proteins, it binds directly to the 5'-end of the 23S rRNA, where it nucleates assembly of the 50S subunit. One of the proteins that surrounds the polypeptide exit tunnel on the outside of the subunit. The polypeptide is Large ribosomal subunit protein uL24 (Porphyromonas gingivalis (strain ATCC 33277 / DSM 20709 / CIP 103683 / JCM 12257 / NCTC 11834 / 2561)).